We begin with the raw amino-acid sequence, 360 residues long: uncharacterized protein (360 aa).

The next 6 membrane-spanning stretches (helical) occupy residues 12-32 (ILPLLIIVTFSVTSIVWITQI), 52-72 (VVLVLPTLLFILLPIITVIAV), 96-116 (IQLALPALYVALTIMLLAYYI), 278-298 (IIWPLYNFVLPCLALAVFLRY), 306-326 (FMPVLFSALTVLFVTAIHFIL), and 336-356 (FIFACYFNLLVALTIGLYLLV).

Its subcellular location is the cell membrane. This is an uncharacterized protein from Rickettsia prowazekii (strain Madrid E).